The sequence spans 473 residues: 3-isopropylmalate dehydratase large subunit (473 aa).

[4Fe-4S] cluster is bound by residues Cys354, Cys414, and Cys417.

This sequence belongs to the aconitase/IPM isomerase family. LeuC type 1 subfamily. In terms of assembly, heterodimer of LeuC and LeuD. It depends on [4Fe-4S] cluster as a cofactor.

The enzyme catalyses (2R,3S)-3-isopropylmalate = (2S)-2-isopropylmalate. Its pathway is amino-acid biosynthesis; L-leucine biosynthesis; L-leucine from 3-methyl-2-oxobutanoate: step 2/4. In terms of biological role, catalyzes the isomerization between 2-isopropylmalate and 3-isopropylmalate, via the formation of 2-isopropylmaleate. The protein is 3-isopropylmalate dehydratase large subunit of Mycobacterium ulcerans (strain Agy99).